We begin with the raw amino-acid sequence, 309 residues long: Porphobilinogen deaminase (309 aa).

Position 234 is an S-(dipyrrolylmethanemethyl)cysteine (Cys-234).

This sequence belongs to the HMBS family. Monomer. It depends on dipyrromethane as a cofactor.

It carries out the reaction 4 porphobilinogen + H2O = hydroxymethylbilane + 4 NH4(+). Its pathway is porphyrin-containing compound metabolism; protoporphyrin-IX biosynthesis; coproporphyrinogen-III from 5-aminolevulinate: step 2/4. In terms of biological role, tetrapolymerization of the monopyrrole PBG into the hydroxymethylbilane pre-uroporphyrinogen in several discrete steps. The sequence is that of Porphobilinogen deaminase (hemC) from Mycobacterium bovis (strain ATCC BAA-935 / AF2122/97).